Here is a 333-residue protein sequence, read N- to C-terminus: Acetoin:2,6-dichlorophenolindophenol oxidoreductase subunit alpha (333 aa).

As to quaternary structure, tetramer of 2 alpha and 2 beta subunits. Thiamine diphosphate is required as a cofactor.

The protein operates within ketone degradation; acetoin degradation. Functionally, catalyzes the 2,6-dichlorophenolindophenol-dependent cleavage of acetoin into acetate and acetaldehyde, in vitro. The alpha subunit is probably the catalytic subunit of the enzyme. The polypeptide is Acetoin:2,6-dichlorophenolindophenol oxidoreductase subunit alpha (acoA) (Cupriavidus necator (strain ATCC 17699 / DSM 428 / KCTC 22496 / NCIMB 10442 / H16 / Stanier 337) (Ralstonia eutropha)).